A 243-amino-acid chain; its full sequence is Small ribosomal subunit protein uS3 (243 aa).

The 72-residue stretch at 39–110 (IRTFIEKKYG…QVRINVVEVE (72 aa)) folds into the KH type-2 domain. Residues 216–243 (QTIPVGANPKRKASRRPQQFEDRSNENS) are disordered. The segment covering 233-243 (QQFEDRSNENS) has biased composition (basic and acidic residues).

It belongs to the universal ribosomal protein uS3 family. In terms of assembly, part of the 30S ribosomal subunit. Forms a tight complex with proteins S10 and S14.

Its function is as follows. Binds the lower part of the 30S subunit head. Binds mRNA in the 70S ribosome, positioning it for translation. This is Small ribosomal subunit protein uS3 from Prochlorococcus marinus (strain MIT 9215).